Consider the following 160-residue polypeptide: Lipoprotein signal peptidase (160 aa).

The next 2 membrane-spanning stretches (helical) occupy residues 60–80 (TEWL…AFFL) and 84–104 (LPFL…AGTI). Active-site residues include Asp-118 and Asp-132. Residues 127 to 147 (TFNMADSCLTLGIIWLVLLYL) form a helical membrane-spanning segment.

It belongs to the peptidase A8 family.

The protein localises to the cell membrane. The catalysed reaction is Release of signal peptides from bacterial membrane prolipoproteins. Hydrolyzes -Xaa-Yaa-Zaa-|-(S,diacylglyceryl)Cys-, in which Xaa is hydrophobic (preferably Leu), and Yaa (Ala or Ser) and Zaa (Gly or Ala) have small, neutral side chains.. Its pathway is protein modification; lipoprotein biosynthesis (signal peptide cleavage). Its function is as follows. This protein specifically catalyzes the removal of signal peptides from prolipoproteins. This Dehalococcoides mccartyi (strain ATCC BAA-2266 / KCTC 15142 / 195) (Dehalococcoides ethenogenes (strain 195)) protein is Lipoprotein signal peptidase.